Reading from the N-terminus, the 400-residue chain is Acetate kinase (400 aa).

N8 lines the Mg(2+) pocket. K15 is an ATP binding site. R89 contacts substrate. D146 functions as the Proton donor/acceptor in the catalytic mechanism. ATP contacts are provided by residues 206 to 210 (HVGNG), 283 to 285 (DMR), and 331 to 335 (GMGEN). Residue E383 participates in Mg(2+) binding.

Belongs to the acetokinase family. Homodimer. Mg(2+) serves as cofactor. Mn(2+) is required as a cofactor.

The protein localises to the cytoplasm. The catalysed reaction is acetate + ATP = acetyl phosphate + ADP. Its pathway is metabolic intermediate biosynthesis; acetyl-CoA biosynthesis; acetyl-CoA from acetate: step 1/2. In terms of biological role, catalyzes the formation of acetyl phosphate from acetate and ATP. Can also catalyze the reverse reaction. The chain is Acetate kinase from Streptococcus equi subsp. zooepidemicus (strain MGCS10565).